The chain runs to 58 residues: UPF0391 membrane protein Maqu_2901 (58 aa).

2 helical membrane-spanning segments follow: residues 4 to 24 and 28 to 48; these read WAIVCLVIAVIAGILGFGGIA and AGFAKILFFVFLVLLVVSLVV.

This sequence belongs to the UPF0391 family.

The protein resides in the cell membrane. The protein is UPF0391 membrane protein Maqu_2901 of Marinobacter nauticus (strain ATCC 700491 / DSM 11845 / VT8) (Marinobacter aquaeolei).